Here is a 202-residue protein sequence, read N- to C-terminus: B-cell CLL/lymphoma 7 protein family member B (202 aa).

The interval 53 to 202 is disordered; the sequence is DSKEKEKSKS…PTVPQTASES (150 aa). Positions 90 to 99 are enriched in polar residues; that stretch reads ENSNQSSVSD. Over residues 107-123 the composition is skewed to low complexity; the sequence is SSTNSSPSPQQSESLSP. A phosphoserine mark is found at Ser-114, Ser-118, Ser-120, Ser-122, Ser-127, Ser-148, and Ser-152.

Belongs to the BCL7 family. Ubiquitous.

In terms of biological role, positive regulator of apoptosis. Plays a role in the Wnt signaling pathway, negatively regulating the expression of Wnt signaling components CTNNB1 and HMGA1. Involved in cell cycle progression, maintenance of the nuclear structure and stem cell differentiation. May play a role in lung tumor development or progression. This chain is B-cell CLL/lymphoma 7 protein family member B (BCL7B), found in Homo sapiens (Human).